The chain runs to 139 residues: Large-conductance mechanosensitive channel (139 aa).

Helical transmembrane passes span 16 to 36, 40 to 60, and 79 to 99; these read VIDLAVGVIIGAAFNDIVKAL, IVMPPIGLVLSGIDFSDLAWV, and GAFINTCIRFLIVAWAVFMLV.

The protein belongs to the MscL family. Homopentamer.

It is found in the cell inner membrane. Functionally, channel that opens in response to stretch forces in the membrane lipid bilayer. May participate in the regulation of osmotic pressure changes within the cell. In Phenylobacterium zucineum (strain HLK1), this protein is Large-conductance mechanosensitive channel.